A 931-amino-acid chain; its full sequence is Synaptopodin (931 aa).

2 disordered regions span residues 56-78 and 113-243; these read EEEGTSKSRVNHGTPPLSRAPAI and ASVS…MEGY. The residue at position 134 (Ser134) is a Phosphoserine. A compositionally biased stretch (basic and acidic residues) spans 136-148; sequence TEKDLKEAKERSQ. 2 stretches are compositionally biased toward polar residues: residues 153–164 and 188–200; these read QLTTPPSSNSRG and PKLSQEALQTGHP. Phosphoserine is present on residues Ser202, Ser222, and Ser258. Positions 214–232 are enriched in low complexity; that stretch reads PTSPSKPGSPKHSSSQSPS. Residues 280–420 are disordered; sequence GLHLSQNRET…SSSGPPAADL (141 aa). Polar residues-rich tracts occupy residues 282-293 and 309-370; these read HLSQNRETQQSS and INQN…NTPS. The span at 373–384 shows a compositional bias: basic and acidic residues; it reads DGQRPVPAEEVR. Ser490 and Ser514 each carry phosphoserine. Disordered stretches follow at residues 542–591 and 691–711; these read RRPL…KGQV and SPRIQAKPKPKPNQNLSEASG. Position 549 is a phosphothreonine (Thr549). Residues 551-554 carry the PPxY motif motif; sequence PPTY. Positions 556-568 are enriched in polar residues; the sequence is ETLSTAPVASQVR. A Phosphoserine modification is found at Ser569. Residues 569-580 show a composition bias toward low complexity; the sequence is SPPSYSTLYPSS. The PPxY motif signature appears at 570 to 573; it reads PPSY. Residues Ser691, Ser742, Ser746, and Ser767 each carry the phosphoserine modification. A Phosphothreonine modification is found at Thr771. Positions 775–918 are disordered; that stretch reads SLYHGYLPEN…RPSFSTRNAG (144 aa). Residues 816 to 841 are compositionally biased toward low complexity; that stretch reads SSRATSSRASSRTVSPRAASPAKPSS. Ser835 carries the phosphoserine modification. Arg850 bears the Omega-N-methylarginine mark. Position 856 is a phosphoserine (Ser856). A compositionally biased stretch (polar residues) spans 874–895; it reads VQDSLQPTAVSPTYSSDISPVS.

Belongs to the synaptopodin family. As to quaternary structure, interacts with BAIAP1. Interacts with actin. Interacts (via PPxY motifs) with WWC1 (via WW domains). In terms of processing, O-glycosylated. In terms of tissue distribution, expressed at high levels in brain and at moderate, but still significant levels in the heart, skeletal muscle, lung and kidney. In brain, expressed in the cerebral cortex, hippocampus, olfactory bulb and striatum.

It is found in the cytoplasm. The protein localises to the cytoskeleton. It localises to the cell junction. The protein resides in the tight junction. Its subcellular location is the perikaryon. It is found in the cell projection. The protein localises to the dendritic spine. It localises to the postsynaptic density. The protein resides in the synapse. Its subcellular location is the cytosol. In terms of biological role, actin-associated protein that may play a role in modulating actin-based shape and motility of dendritic spines and renal podocyte foot processes. Seems to be essential for the formation of spine apparatuses in spines of telencephalic neurons, which is involved in synaptic plasticity. This chain is Synaptopodin (Synpo), found in Rattus norvegicus (Rat).